The primary structure comprises 411 residues: Tyrosine--tRNA ligase (411 aa).

Residue tyrosine 34 coordinates L-tyrosine. The short motif at 39-48 (CTATSLHIGS) is the 'HIGH' region element. Tyrosine 171 and glutamine 175 together coordinate L-tyrosine. The 'KMSKS' region signature appears at 231–235 (KMGKT). Lysine 234 lines the ATP pocket. Positions 345–411 (ISAYNLFYNA…GKKRHILVKV (67 aa)) constitute an S4 RNA-binding domain.

The protein belongs to the class-I aminoacyl-tRNA synthetase family. TyrS type 1 subfamily. Homodimer.

It is found in the cytoplasm. The catalysed reaction is tRNA(Tyr) + L-tyrosine + ATP = L-tyrosyl-tRNA(Tyr) + AMP + diphosphate + H(+). Functionally, catalyzes the attachment of tyrosine to tRNA(Tyr) in a two-step reaction: tyrosine is first activated by ATP to form Tyr-AMP and then transferred to the acceptor end of tRNA(Tyr). The polypeptide is Tyrosine--tRNA ligase (Rickettsia prowazekii (strain Madrid E)).